A 309-amino-acid polypeptide reads, in one-letter code: Taste receptor type 2 member 20 (309 aa).

Over 1–6 (MMSFLH) the chain is Extracellular. The chain crosses the membrane as a helical span at residues 7–27 (IVFSILVVVAFILGNFANGFI). At 28–46 (ALINFIAWVKRQKISSADQ) the chain is on the cytoplasmic side. Residues 47-67 (IIAALAVSRVGLLWVILLHWY) traverse the membrane as a helical segment. The Extracellular portion of the chain corresponds to 68-79 (STVLNPTSSNLK). A helical transmembrane segment spans residues 80-100 (VIIFISNAWAVTNHFSIWLAT). Residues 101 to 125 (SLSIFYLLKIVNFSRLIFHHLKRKA) are Cytoplasmic-facing. A helical transmembrane segment spans residues 126–146 (KSVVLVIVLGSLFFLVCXLVM). Residues 147–178 (KNTYINVWTEECEGNVTWKIKLRNAMHLSNLT) lie on the Extracellular side of the membrane. The helical transmembrane segment at 179 to 199 (VAMLANLIPFTLTLISFLLLI) threads the bilayer. At 200-229 (YSLCKHLKKMQLHGKGSQDPSTKIHIKALQ) the chain is on the cytoplasmic side. A helical membrane pass occupies residues 230 to 250 (TVTSFLILLAIYFLCLITSFW). Residues 251 to 259 (NSKMRPKEI) lie on the Extracellular side of the membrane. The chain crosses the membrane as a helical span at residues 260–280 (VLMLCQAFGIIYPSFHSFILI). At 281–309 (WGNKTLKQTFLSVLWQVTCWAKGQNQSTP) the chain is on the cytoplasmic side.

The protein belongs to the G-protein coupled receptor T2R family.

The protein resides in the membrane. In terms of biological role, receptor that may play a role in the perception of bitterness and is gustducin-linked. May play a role in sensing the chemical composition of the gastrointestinal content. The activity of this receptor may stimulate alpha gustducin, mediate PLC-beta-2 activation and lead to the gating of TRPM5. This is Taste receptor type 2 member 20 (TAS2R20) from Pan troglodytes (Chimpanzee).